Reading from the N-terminus, the 755-residue chain is Xaa-Pro dipeptidyl-peptidase (755 aa).

Active-site charge relay system residues include Ser-348, Asp-468, and His-498.

Belongs to the peptidase S15 family. Homodimer.

It localises to the cytoplasm. The catalysed reaction is Hydrolyzes Xaa-Pro-|- bonds to release unblocked, N-terminal dipeptides from substrates including Ala-Pro-|-p-nitroanilide and (sequentially) Tyr-Pro-|-Phe-Pro-|-Gly-Pro-|-Ile.. Removes N-terminal dipeptides sequentially from polypeptides having unsubstituted N-termini provided that the penultimate residue is proline. The protein is Xaa-Pro dipeptidyl-peptidase of Streptococcus thermophilus (strain ATCC BAA-250 / LMG 18311).